The chain runs to 121 residues: Large ribosomal subunit protein uL18 (121 aa).

The protein belongs to the universal ribosomal protein uL18 family. In terms of assembly, part of the 50S ribosomal subunit; part of the 5S rRNA/L5/L18/L25 subcomplex. Contacts the 5S and 23S rRNAs.

Functionally, this is one of the proteins that bind and probably mediate the attachment of the 5S RNA into the large ribosomal subunit, where it forms part of the central protuberance. The chain is Large ribosomal subunit protein uL18 from Buchnera aphidicola subsp. Baizongia pistaciae (strain Bp).